We begin with the raw amino-acid sequence, 254 residues long: L-erythrulose-1-phosphate isomerase (254 aa).

Catalysis depends on His-97, which acts as the Electrophile. Residue Glu-170 is the Proton acceptor of the active site. Substrate-binding residues include Gly-176 and Ser-213.

This sequence belongs to the triosephosphate isomerase family. As to quaternary structure, homodimer.

The protein resides in the cytoplasm. It carries out the reaction L-erythrulose 1-phosphate = D-erythrulose 4-phosphate. It functions in the pathway carbohydrate metabolism; erythritol degradation. Functionally, catalyzes the isomerization of D-erythrulose-4P to L-erythrulose-1P. This Mesorhizobium japonicum (strain LMG 29417 / CECT 9101 / MAFF 303099) (Mesorhizobium loti (strain MAFF 303099)) protein is L-erythrulose-1-phosphate isomerase.